A 343-amino-acid chain; its full sequence is Holliday junction branch migration complex subunit RuvB (343 aa).

Residues Met-1–Tyr-181 are large ATPase domain (RuvB-L). ATP is bound by residues Leu-20, Arg-21, Gly-62, Lys-65, Thr-66, Thr-67, Glu-128–Phe-130, Arg-171, Tyr-181, and Arg-218. Thr-66 lines the Mg(2+) pocket. Positions Thr-182–Gly-252 are small ATPAse domain (RuvB-S). The head domain (RuvB-H) stretch occupies residues Asp-255–Glu-343. Arg-308 and Arg-313 together coordinate DNA.

It belongs to the RuvB family. As to quaternary structure, homohexamer. Forms an RuvA(8)-RuvB(12)-Holliday junction (HJ) complex. HJ DNA is sandwiched between 2 RuvA tetramers; dsDNA enters through RuvA and exits via RuvB. An RuvB hexamer assembles on each DNA strand where it exits the tetramer. Each RuvB hexamer is contacted by two RuvA subunits (via domain III) on 2 adjacent RuvB subunits; this complex drives branch migration. In the full resolvosome a probable DNA-RuvA(4)-RuvB(12)-RuvC(2) complex forms which resolves the HJ.

It is found in the cytoplasm. The enzyme catalyses ATP + H2O = ADP + phosphate + H(+). The RuvA-RuvB-RuvC complex processes Holliday junction (HJ) DNA during genetic recombination and DNA repair, while the RuvA-RuvB complex plays an important role in the rescue of blocked DNA replication forks via replication fork reversal (RFR). RuvA specifically binds to HJ cruciform DNA, conferring on it an open structure. The RuvB hexamer acts as an ATP-dependent pump, pulling dsDNA into and through the RuvAB complex. RuvB forms 2 homohexamers on either side of HJ DNA bound by 1 or 2 RuvA tetramers; 4 subunits per hexamer contact DNA at a time. Coordinated motions by a converter formed by DNA-disengaged RuvB subunits stimulates ATP hydrolysis and nucleotide exchange. Immobilization of the converter enables RuvB to convert the ATP-contained energy into a lever motion, pulling 2 nucleotides of DNA out of the RuvA tetramer per ATP hydrolyzed, thus driving DNA branch migration. The RuvB motors rotate together with the DNA substrate, which together with the progressing nucleotide cycle form the mechanistic basis for DNA recombination by continuous HJ branch migration. Branch migration allows RuvC to scan DNA until it finds its consensus sequence, where it cleaves and resolves cruciform DNA. This Campylobacter fetus subsp. fetus (strain 82-40) protein is Holliday junction branch migration complex subunit RuvB.